Consider the following 270-residue polypeptide: MFAPRLLDFQKTKYARFMNHRVPAHKRYQPTEYEHAANCATHAFWIIPSILGSSNLYFLSDDDWETISAWIYGLGLCGLFVVSTVFHTISWKKSHLRMVEHCLHMFDRMVIYFFIAASYAPWLNLRELGPWASHMRWLVWIMASVGTIYVFFFHERTGSCVQFLRGEACPKAGTACLPARYKLVELLCYVVMGFFPALVILSMPNTEGIWELVTGGVFYCLGMVFFKSDGRIPFAHAIWHLFVAFGAGTHYYAIWRYLYLPSTLQTKVSK.

Residues 1–38 are Cytoplasmic-facing; it reads MFAPRLLDFQKTKYARFMNHRVPAHKRYQPTEYEHAAN. The helical transmembrane segment at 39–59 threads the bilayer; that stretch reads CATHAFWIIPSILGSSNLYFL. Topologically, residues 60–65 are lumenal; sequence SDDDWE. The chain crosses the membrane as a helical span at residues 66 to 86; sequence TISAWIYGLGLCGLFVVSTVF. Over 87 to 102 the chain is Cytoplasmic; sequence HTISWKKSHLRMVEHC. A helical membrane pass occupies residues 103–123; the sequence is LHMFDRMVIYFFIAASYAPWL. The Lumenal portion of the chain corresponds to 124–132; sequence NLRELGPWA. The chain crosses the membrane as a helical span at residues 133-153; it reads SHMRWLVWIMASVGTIYVFFF. The Cytoplasmic portion of the chain corresponds to 154-182; that stretch reads HERTGSCVQFLRGEACPKAGTACLPARYK. The chain crosses the membrane as a helical span at residues 183–203; the sequence is LVELLCYVVMGFFPALVILSM. Residues 204–205 are Lumenal-facing; sequence PN. A helical transmembrane segment spans residues 206–226; the sequence is TEGIWELVTGGVFYCLGMVFF. Residues 227–233 lie on the Cytoplasmic side of the membrane; the sequence is KSDGRIP. Residues 234–254 traverse the membrane as a helical segment; that stretch reads FAHAIWHLFVAFGAGTHYYAI. Residues 255-270 are Lumenal-facing; sequence WRYLYLPSTLQTKVSK.

This sequence belongs to the ADIPOR family. Shows restricted expression with highest levels in brain and testis.

It is found in the golgi apparatus membrane. The protein is Monocyte to macrophage differentiation factor 2 of Homo sapiens (Human).